Consider the following 236-residue polypeptide: 7-cyano-7-deazaguanine synthase (236 aa).

21-31 (LSGGLDSATVL) contributes to the ATP binding site. Residues Cys-202, Cys-212, Cys-215, and Cys-218 each contribute to the Zn(2+) site.

The protein belongs to the QueC family. Requires Zn(2+) as cofactor.

The catalysed reaction is 7-carboxy-7-deazaguanine + NH4(+) + ATP = 7-cyano-7-deazaguanine + ADP + phosphate + H2O + H(+). The protein operates within purine metabolism; 7-cyano-7-deazaguanine biosynthesis. Functionally, catalyzes the ATP-dependent conversion of 7-carboxy-7-deazaguanine (CDG) to 7-cyano-7-deazaguanine (preQ(0)). The chain is 7-cyano-7-deazaguanine synthase from Frankia casuarinae (strain DSM 45818 / CECT 9043 / HFP020203 / CcI3).